Consider the following 378-residue polypeptide: 5-amino-6-(D-ribitylamino)uracil--L-tyrosine 4-hydroxyphenyl transferase (378 aa).

Positions 59-306 (VTYVINRNIN…TAVARIYLGN (248 aa)) constitute a Radical SAM core domain. [4Fe-4S] cluster is bound by residues C73, C77, and C80.

The protein belongs to the radical SAM superfamily. CofH family. As to quaternary structure, consists of two subunits, CofG and CofH. [4Fe-4S] cluster is required as a cofactor.

The enzyme catalyses 5-amino-6-(D-ribitylamino)uracil + L-tyrosine + S-adenosyl-L-methionine = 5-amino-5-(4-hydroxybenzyl)-6-(D-ribitylimino)-5,6-dihydrouracil + 2-iminoacetate + 5'-deoxyadenosine + L-methionine + H(+). The protein operates within cofactor biosynthesis; coenzyme F0 biosynthesis. In terms of biological role, catalyzes the radical-mediated synthesis of 5-amino-5-(4-hydroxybenzyl)-6-(D-ribitylimino)-5,6-dihydrouracil from 5-amino-6-(D-ribitylamino)uracil and L-tyrosine. The protein is 5-amino-6-(D-ribitylamino)uracil--L-tyrosine 4-hydroxyphenyl transferase of Microcystis aeruginosa (strain NIES-843 / IAM M-2473).